Reading from the N-terminus, the 485-residue chain is Glutamyl-tRNA(Gln) amidotransferase subunit A (485 aa).

Catalysis depends on charge relay system residues lysine 78 and serine 153. The active-site Acyl-ester intermediate is the serine 177.

This sequence belongs to the amidase family. GatA subfamily. Heterotrimer of A, B and C subunits.

It carries out the reaction L-glutamyl-tRNA(Gln) + L-glutamine + ATP + H2O = L-glutaminyl-tRNA(Gln) + L-glutamate + ADP + phosphate + H(+). Allows the formation of correctly charged Gln-tRNA(Gln) through the transamidation of misacylated Glu-tRNA(Gln) in organisms which lack glutaminyl-tRNA synthetase. The reaction takes place in the presence of glutamine and ATP through an activated gamma-phospho-Glu-tRNA(Gln). The polypeptide is Glutamyl-tRNA(Gln) amidotransferase subunit A (Desulfatibacillum aliphaticivorans).